We begin with the raw amino-acid sequence, 915 residues long: Bifunctional uridylyltransferase/uridylyl-removing enzyme (915 aa).

The segment at 1 to 360 (MFNCAVTAID…PDEERPKKQP (360 aa)) is uridylyltransferase. Residues 361 to 731 (INARFNQVGE…EHRELALDAV (371 aa)) are uridylyl-removing. An HD domain is found at 478 to 594 (VDAHTLFLIR…TLFADLVGNV (117 aa)). ACT domains lie at 732 to 817 (QVFV…RIPR) and 840 to 915 (IMSL…NDSI).

Belongs to the GlnD family. The cofactor is Mg(2+).

The catalysed reaction is [protein-PII]-L-tyrosine + UTP = [protein-PII]-uridylyl-L-tyrosine + diphosphate. The enzyme catalyses [protein-PII]-uridylyl-L-tyrosine + H2O = [protein-PII]-L-tyrosine + UMP + H(+). With respect to regulation, uridylyltransferase (UTase) activity is inhibited by glutamine, while glutamine activates uridylyl-removing (UR) activity. Functionally, modifies, by uridylylation and deuridylylation, the PII regulatory proteins (GlnB and homologs), in response to the nitrogen status of the cell that GlnD senses through the glutamine level. Under low glutamine levels, catalyzes the conversion of the PII proteins and UTP to PII-UMP and PPi, while under higher glutamine levels, GlnD hydrolyzes PII-UMP to PII and UMP (deuridylylation). Thus, controls uridylylation state and activity of the PII proteins, and plays an important role in the regulation of nitrogen assimilation and metabolism. This Psychrobacter arcticus (strain DSM 17307 / VKM B-2377 / 273-4) protein is Bifunctional uridylyltransferase/uridylyl-removing enzyme.